We begin with the raw amino-acid sequence, 431 residues long: MANVVVVGAQWGDEGKGKIVDWLSERADVIARFQGGHNAGHTLVIDGTVYKLHALPSGVVRGGKLSVIGNGVVLDPWHLVAEIETVRAQGVEITPETLMIAENTPLILPIHGELDRAREEAASKGTKIGTTGRGIGPAYEDKVGRRSVRVADLADDATLEARVDRALQHHDPLRRGLGIEAVDRDGLIAQLKEIAPAILTYAAPVWKVLNEKRKAGHRILFEGAQGALLDIDFGTYPFVTSSNVIAGQAATGVGIGPGAIDYVLGIVKAYTTRVGEGPFPTELDDADGQRLGERGHEFGTTTGRKRRCGWFDAALVRQTCATSGVNGIALTKLDVLDGFETLKICVGYDLDGKVLDYLPTAADQQGRCAPIYEEMDGWSESTEGARSWADLPGNAVKYVRRIEELIQCPVALLSTSPERDDTILVTDPFAD.

Residues 12 to 18 and 40 to 42 contribute to the GTP site; these read GDEGKGK and GHT. D13 acts as the Proton acceptor in catalysis. Mg(2+)-binding residues include D13 and G40. IMP-binding positions include 13–16, 38–41, T131, R145, Q225, T240, and R304; these read DEGK and NAGH. Residue H41 is the Proton donor of the active site. Residue 300–306 coordinates substrate; sequence TTTGRKR. GTP contacts are provided by residues R306, 332 to 334, and 414 to 416; these read KLD and STS.

It belongs to the adenylosuccinate synthetase family. As to quaternary structure, homodimer. It depends on Mg(2+) as a cofactor.

The protein localises to the cytoplasm. It catalyses the reaction IMP + L-aspartate + GTP = N(6)-(1,2-dicarboxyethyl)-AMP + GDP + phosphate + 2 H(+). Its pathway is purine metabolism; AMP biosynthesis via de novo pathway; AMP from IMP: step 1/2. In terms of biological role, plays an important role in the de novo pathway of purine nucleotide biosynthesis. Catalyzes the first committed step in the biosynthesis of AMP from IMP. This is Adenylosuccinate synthetase from Dinoroseobacter shibae (strain DSM 16493 / NCIMB 14021 / DFL 12).